The primary structure comprises 319 residues: tRNA dimethylallyltransferase (319 aa).

ATP is bound at residue 15–22; that stretch reads GPTASGKS. A substrate-binding site is contributed by 17-22; it reads TASGKS. Interaction with substrate tRNA regions lie at residues 40-43 and 164-168; these read DSRQ and QRLVR.

The protein belongs to the IPP transferase family. In terms of assembly, monomer. Mg(2+) serves as cofactor.

The enzyme catalyses adenosine(37) in tRNA + dimethylallyl diphosphate = N(6)-dimethylallyladenosine(37) in tRNA + diphosphate. Catalyzes the transfer of a dimethylallyl group onto the adenine at position 37 in tRNAs that read codons beginning with uridine, leading to the formation of N6-(dimethylallyl)adenosine (i(6)A). In Chlorobium phaeobacteroides (strain DSM 266 / SMG 266 / 2430), this protein is tRNA dimethylallyltransferase.